The following is a 314-amino-acid chain: TPR repeat-containing protein MJ1345 (314 aa).

9 TPR repeats span residues 12 to 45 (ESIL…RESP), 46 to 78 (DVYV…KPKY), 80 to 112 (LANF…EKSD), 114 to 146 (PVKY…YPKS), 147 to 180 (AIAW…NPKD), 182 to 214 (QSLL…NNKD), 215 to 248 (IRAL…NPDD), 249 to 282 (PLLY…NPNI), and 284 to 313 (DAWN…LDIY).

In Methanocaldococcus jannaschii (strain ATCC 43067 / DSM 2661 / JAL-1 / JCM 10045 / NBRC 100440) (Methanococcus jannaschii), this protein is TPR repeat-containing protein MJ1345.